Here is an 81-residue protein sequence, read N- to C-terminus: uncharacterized protein (81 aa).

The next 2 membrane-spanning stretches (helical) occupy residues 10 to 30 and 56 to 76; these read FFVL…FLLL and VLYL…AFAI.

It is found in the host membrane. This is an uncharacterized protein from Acidianus two-tailed virus (ATV).